A 288-amino-acid polypeptide reads, in one-letter code: 2-hydroxy-6-oxononadienedioate/2-hydroxy-6-oxononatrienedioate hydrolase (288 aa).

The 236-residue stretch at 39 to 274 (LVLLHGSGPG…RCGHWAQWEH (236 aa)) folds into the AB hydrolase-1 domain. Residue H268 is the Proton acceptor of the active site.

The protein belongs to the AB hydrolase superfamily. MhpC family. In terms of assembly, homodimer.

It catalyses the reaction (2Z,4E)-2-hydroxy-6-oxonona-2,4-dienedioate + H2O = (2Z)-2-hydroxypenta-2,4-dienoate + succinate + H(+). The catalysed reaction is (2Z,4E,7E)-2-hydroxy-6-oxonona-2,4,7-trienedioate + H2O = (2Z)-2-hydroxypenta-2,4-dienoate + fumarate + H(+). The protein operates within aromatic compound metabolism; 3-phenylpropanoate degradation. Its function is as follows. Catalyzes the cleavage of the C5-C6 bond of 2-hydroxy-6-oxononadienedioate and 2-hydroxy-6-oxononatrienedioate, a dienol ring fission product of the bacterial meta-cleavage pathway for degradation of phenylpropionic acid. The polypeptide is 2-hydroxy-6-oxononadienedioate/2-hydroxy-6-oxononatrienedioate hydrolase (Paraburkholderia phymatum (strain DSM 17167 / CIP 108236 / LMG 21445 / STM815) (Burkholderia phymatum)).